The sequence spans 1014 residues: Latrophilin-like protein 1 (1014 aa).

The first 27 residues, 1-27 (MRRNKTTYSLLQTILVACLLTVTPTFA), serve as a signal peptide directing secretion. The N-linked (GlcNAc...) asparagine glycan is linked to Asn-4. Topologically, residues 28–555 (SNKPTTDESG…IDQTLLTLLT (528 aa)) are extracellular. One can recognise an SUEL-type lectin domain in the interval 43–134 (ICDGEAAELS…KYLEVKYNCV (92 aa)). The GAIN-B domain occupies 359–542 (ESNVIVQPAI…AVLMDVRGHD (184 aa)). N-linked (GlcNAc...) asparagine glycosylation is found at Asn-473 and Asn-518. 2 cysteine pairs are disulfide-bonded: Cys-497/Cys-524 and Cys-512/Cys-526. The segment at 497 to 542 (CVWWNHHELKWKPSGCKLSYHNKTMTSCDCTHLTHFAVLMDVRGHD) is GPS. The chain crosses the membrane as a helical span at residues 556-576 (YVGCIISIICLLLTFFAYLIF). The Cytoplasmic segment spans residues 577 to 584 (SRNGGDRV). Residues 585–605 (FIHENLCLSLAIAEITFLAGI) form a helical membrane-spanning segment. Residues 606–613 (TRTEDSLQ) lie on the Extracellular side of the membrane. Residues 614–634 (CGIIAVALMYMFLSALTWMLL) traverse the membrane as a helical segment. Residues 635–653 (EGYHIHRMLTEVFPSDPRR) are Cytoplasmic-facing. Residues 654-674 (FTYLLVGYIPPAIITLVAYLY) traverse the membrane as a helical segment. Residues 675–692 (NSDGFGTPDHCWLSTQNN) lie on the Extracellular side of the membrane. A helical membrane pass occupies residues 693 to 713 (FIWFFAGPACFIFCANSLVLV). The Cytoplasmic segment spans residues 714 to 745 (KTLCTVYQHTSGGYLPCRHDVDSGRSIRNWVK). The chain crosses the membrane as a helical span at residues 746 to 766 (GSLALASLLGVTWIFGLFWVE). The Extracellular segment spans residues 767–770 (DSRS). Residues 771–791 (IVMAYVFTISNSLQGLFIFLF) traverse the membrane as a helical segment. Over 792–1014 (HVVFAEKMRK…NKPSMYCQDL (223 aa)) the chain is Cytoplasmic. Disordered regions lie at residues 814–833 (GSSNSSPNHKRHNVQRDLMS) and 932–994 (YQGW…EVTP). Pro residues predominate over residues 941–952 (PEFSPPPPPLST). A compositionally biased stretch (low complexity) spans 965 to 986 (SGRRPPSSKMSDDSAYSDGSSS).

Belongs to the G-protein coupled receptor 2 family. LN-TM7 subfamily. In terms of assembly, monomer and homodimer. Autoproteolytically processed at the GPS region of the GAIN-B domain; this cleavage modulates receptor activity. As to expression, expressed in epidermal precursor cells and pharyngeal primordium. In adults expression is seen in pharyngeal muscle cells and nervous system, the nerve ring, the gonad, and the vulva.

The protein localises to the cell membrane. Has a role in the establishment of anterior-posterior polarity in tissues during embryogenesis. Required for the alignment of the mitotic spindles and division planes. May have a role in cell death events. Required for normal defection and oocyte fertilization. Involved in sperm function. Operates in pharyngeal pumping during feeding. In Caenorhabditis elegans, this protein is Latrophilin-like protein 1.